Here is a 217-residue protein sequence, read N- to C-terminus: U exon protein (217 aa).

Disordered stretches follow at residues 79-113 (ISGE…GGRV) and 171-217 (KEAP…WQRR). The segment covering 188 to 197 (RGQRGRKRRC) has biased composition (basic residues). Residues 202–217 (GGFQQPTGANQAWQRR) are compositionally biased toward polar residues.

It belongs to the adenoviridae U exon protein family.

It is found in the host nucleus. The protein localises to the host nucleoplasm. Its subcellular location is the host nucleolus. Its function is as follows. Might play a role in viral replication since it is associated with viral replication centers. Seems to have an effect on DBP localization. The protein is U exon protein of Human adenovirus C serotype 5 (HAdV-5).